The following is a 595-amino-acid chain: Cyclin-dependent kinase-like 3 (595 aa).

One can recognise a Protein kinase domain in the interval 4–286; it reads YETLGKVGEG…STDLLRHDYF (283 aa). ATP-binding positions include 10 to 18 and Lys-33; that span reads VGEGSYGTV. The [NKR]KIAxRE motif lies at 45–51; it reads KIATREI. Asp-125 functions as the Proton acceptor in the catalytic mechanism. Thr-158 is modified (phosphothreonine). A Phosphotyrosine modification is found at Tyr-160. Disordered stretches follow at residues 362–427, 448–513, and 551–586; these read VIKA…PHAG, SSNL…NKRK, and RESKKTDSSKIPTLLSMDPNQEKQEGGDGDCEGKNL. Residues 368–386 show a composition bias toward basic and acidic residues; the sequence is GKGDVPDQKKPEYEGDHRQ. Over residues 387 to 397 the composition is skewed to polar residues; that stretch reads QGTADDTQPSS. Residues 448 to 457 show a composition bias toward low complexity; sequence SSNLSHPNSR. Polar residues-rich tracts occupy residues 468 to 491 and 499 to 509; these read SSQTIGQTLSNSRQEDTGPTQVQT and RTGQNDQISSG. Basic and acidic residues predominate over residues 570–585; that stretch reads NQEKQEGGDGDCEGKN.

Belongs to the protein kinase superfamily. CMGC Ser/Thr protein kinase family. CDC2/CDKX subfamily.

It is found in the cytoplasm. It carries out the reaction L-seryl-[protein] + ATP = O-phospho-L-seryl-[protein] + ADP + H(+). It catalyses the reaction L-threonyl-[protein] + ATP = O-phospho-L-threonyl-[protein] + ADP + H(+). The sequence is that of Cyclin-dependent kinase-like 3 from Mus musculus (Mouse).